The chain runs to 156 residues: Small ribosomal subunit protein uS7 (156 aa).

Belongs to the universal ribosomal protein uS7 family. In terms of assembly, part of the 30S ribosomal subunit. Contacts proteins S9 and S11.

One of the primary rRNA binding proteins, it binds directly to 16S rRNA where it nucleates assembly of the head domain of the 30S subunit. Is located at the subunit interface close to the decoding center, probably blocks exit of the E-site tRNA. The polypeptide is Small ribosomal subunit protein uS7 (Ruegeria pomeroyi (strain ATCC 700808 / DSM 15171 / DSS-3) (Silicibacter pomeroyi)).